Reading from the N-terminus, the 251-residue chain is Cell division protein ZapD (251 aa).

This sequence belongs to the ZapD family. In terms of assembly, interacts with FtsZ.

The protein localises to the cytoplasm. Its function is as follows. Cell division factor that enhances FtsZ-ring assembly. Directly interacts with FtsZ and promotes bundling of FtsZ protofilaments, with a reduction in FtsZ GTPase activity. The protein is Cell division protein ZapD of Burkholderia orbicola (strain MC0-3).